We begin with the raw amino-acid sequence, 484 residues long: Neuronal acetylcholine receptor subunit alpha-9 (484 aa).

Positions 1–27 (MKRNNLSSFYVSLWLLFTATMLQAVES) are cleaved as a signal peptide. Residues 28–240 (AKGKYAQMLF…FTLILKRKSS (213 aa)) are Extracellular-facing. N-linked (GlcNAc...) asparagine glycosylation is present at asparagine 59. Cysteine 157 and cysteine 171 are joined by a disulfide. Asparagine 172 carries N-linked (GlcNAc...) asparagine glycosylation. Na(+) contacts are provided by serine 193 and aspartate 195. Cysteine 221 and cysteine 222 are disulfide-bonded. 3 consecutive transmembrane segments (helical) span residues 241 to 261 (FYIFNLLLPCILISFLAPLGF), 271 to 291 (VSLGVTVLLALTVFQLMVAEI), and 305 to 325 (YIATMTMITASTALTIIIMNV). The Cytoplasmic segment spans residues 326–462 (HHCGSEAKPV…WKKVAKVMDR (137 aa)). Residues 364–395 (RREKEQEHRLEGGDMCRGGDGKSHLSSRNDDS) are disordered. The helical transmembrane segment at 463 to 483 (FFMWIFFIMVFFMSVLIIGKA) threads the bilayer.

The protein belongs to the ligand-gated ion channel (TC 1.A.9) family. Acetylcholine receptor (TC 1.A.9.1) subfamily. Alpha-9/CHRNA9 sub-subfamily. As to quaternary structure, forms homo- or heteropentameric channels in conjunction with CHRNA10. The native outer hair cell receptor is composed of CHRNA9:CHRNA10 heterooligomers. Found in the stoichiometric form (CHRNA9)2:(CHRNA10)3. In terms of tissue distribution, expressed in hair cells of the cochlea (at protein level). Expressed in hair cells of the cochlea.

The protein resides in the synaptic cell membrane. The protein localises to the cell membrane. The enzyme catalyses Ca(2+)(in) = Ca(2+)(out). It carries out the reaction K(+)(in) = K(+)(out). The catalysed reaction is Na(+)(in) = Na(+)(out). It catalyses the reaction Mg(2+)(in) = Mg(2+)(out). Activated by a myriad of ligands such as acetylcholine. AChR activity is inhibited by the antagonist alpha-conotoxins RgIA and GeXXA, small disulfide-constrained peptides from cone snails. In terms of biological role, component of neuronal acetylcholine receptors (nAChRs) that function as pentameric, ligand-gated cation channels with high calcium permeability among other activities. nAChRs are excitatory neurotrasnmitter receptors formed by a collection of nAChR subunits known to mediate synaptic transmission in the nervous system and the neuromuscular junction. Each nAchR subunit confers differential attributes to channel properties, including activation, deactivation and desensitization kinetics, pH sensitivity, cation permeability, and binding to allosteric modulators. Forms either homopentamers or heteropentamers with CHRNA10. Expressed in the inner ear, in sympathetic neurons and in other non-neuronal cells, such as skin keratinocytes and lymphocytes. The channel is permeable to a range of divalent cations including calcium, the influx of which may activate a potassium current which hyperpolarizes the cell membrane. In Gallus gallus (Chicken), this protein is Neuronal acetylcholine receptor subunit alpha-9 (CHRNA9).